We begin with the raw amino-acid sequence, 103 residues long: MAAVSLTVSTVKPLGDRIFIKVSESEEKTAGGILLPDSAKEKPQVGEVAQVGPGKLNDDGSRQTPEVSIGDKVLYSKYAGTDIKLGGDEYVLLSEKDILAVVG.

It belongs to the GroES chaperonin family. Heptamer of 7 subunits arranged in a ring. Interacts with the chaperonin GroEL.

It is found in the cytoplasm. Its function is as follows. Together with the chaperonin GroEL, plays an essential role in assisting protein folding. The GroEL-GroES system forms a nano-cage that allows encapsulation of the non-native substrate proteins and provides a physical environment optimized to promote and accelerate protein folding. GroES binds to the apical surface of the GroEL ring, thereby capping the opening of the GroEL channel. The chain is Co-chaperonin GroES from Prochlorococcus marinus subsp. pastoris (strain CCMP1986 / NIES-2087 / MED4).